The primary structure comprises 884 residues: Protein translocase subunit SecA (884 aa).

ATP-binding positions include Gln-83, 101–105 (GEGKT), and Asp-491.

This sequence belongs to the SecA family.

The protein resides in the plastid. The protein localises to the chloroplast stroma. Its subcellular location is the chloroplast thylakoid membrane. It catalyses the reaction ATP + H2O + cellular proteinSide 1 = ADP + phosphate + cellular proteinSide 2.. Has a central role in coupling the hydrolysis of ATP to the transfer of proteins across the thylakoid membrane. This is Protein translocase subunit SecA from Pyropia yezoensis (Susabi-nori).